The chain runs to 1754 residues: Probable outer membrane protein PmpB (1754 aa).

The first 14 residues, methionine 1–alanine 14, serve as a signal peptide directing secretion. Composition is skewed to low complexity over residues asparagine 68–proline 105 and serine 212–serine 232. Disordered stretches follow at residues asparagine 68 to glycine 109, serine 190 to glutamate 235, proline 252 to glycine 271, asparagine 397 to lysine 438, alanine 621 to serine 668, and threonine 1299 to proline 1332. Polar residues-rich tracts occupy residues proline 252–serine 264 and alanine 402–alanine 412. Composition is skewed to low complexity over residues threonine 413–serine 427, proline 636–serine 668, threonine 1299–serine 1311, and serine 1320–proline 1332. Residues aspartate 1461–phenylalanine 1754 form the Autotransporter domain.

It belongs to the PMP outer membrane protein family.

It localises to the secreted. The protein localises to the cell wall. The protein resides in the cell outer membrane. In Chlamydia trachomatis serovar D (strain ATCC VR-885 / DSM 19411 / UW-3/Cx), this protein is Probable outer membrane protein PmpB (pmpB).